The sequence spans 454 residues: Tubulin alpha-A chain (454 aa).

GTP is bound by residues Gln-12, Asp-72, Ser-141, Gly-145, Thr-146, Thr-180, Asn-207, and Asn-229. Asp-72 contributes to the Mg(2+) binding site. Glu-255 is an active-site residue.

Belongs to the tubulin family. As to quaternary structure, dimer of alpha and beta chains. A typical microtubule is a hollow water-filled tube with an outer diameter of 25 nm and an inner diameter of 15 nM. Alpha-beta heterodimers associate head-to-tail to form protofilaments running lengthwise along the microtubule wall with the beta-tubulin subunit facing the microtubule plus end conferring a structural polarity. Microtubules usually have 13 protofilaments but different protofilament numbers can be found in some organisms and specialized cells. It depends on Mg(2+) as a cofactor.

It is found in the cytoplasm. The protein localises to the cytoskeleton. It catalyses the reaction GTP + H2O = GDP + phosphate + H(+). Functionally, tubulin is the major constituent of microtubules, a cylinder consisting of laterally associated linear protofilaments composed of alpha- and beta-tubulin heterodimers. Microtubules grow by the addition of GTP-tubulin dimers to the microtubule end, where a stabilizing cap forms. Below the cap, tubulin dimers are in GDP-bound state, owing to GTPase activity of alpha-tubulin. In Neurospora crassa (strain ATCC 24698 / 74-OR23-1A / CBS 708.71 / DSM 1257 / FGSC 987), this protein is Tubulin alpha-A chain (tba-1).